The chain runs to 647 residues: DNA mismatch repair protein MutL (647 aa).

Residues 389–423 are disordered; it reads SESSVSSVANKQQPTVKQAKRSADDSDSEHGKLDY. Residues 409–423 are compositionally biased toward basic and acidic residues; the sequence is RSADDSDSEHGKLDY.

The protein belongs to the DNA mismatch repair MutL/HexB family.

Its function is as follows. This protein is involved in the repair of mismatches in DNA. It is required for dam-dependent methyl-directed DNA mismatch repair. May act as a 'molecular matchmaker', a protein that promotes the formation of a stable complex between two or more DNA-binding proteins in an ATP-dependent manner without itself being part of a final effector complex. The chain is DNA mismatch repair protein MutL from Streptococcus thermophilus (strain ATCC BAA-491 / LMD-9).